We begin with the raw amino-acid sequence, 1190 residues long: MSVACVLKRKTVLWQDSFSPHLKQYPEGTLNHNMPVVLTSGPVGQQQPPQPPTHSALATGPHASPVGGSMGVAGRSQDDAMVDYFFQRQHGEQLGGGGSGGGGYNNSKHRWPTGDNIHAEHQVRSMDELNHDFQALALEGRAMGEQLLTGKKFWETDDSNKDGPKGIFLGDQWRESTWGASDHSVSQPIMVQRRPGQGFHVSSEVNSVLSPRSESGGLGVSMVEYVLSSSPGDSCLRKGAFGPRDTEGDENEKVDKKNKGVYEGDKLGDLKEEADSMDKCNGLPVQNGIDGDVKDFSRTPGNCQASASEVDLLGSIQNGSEGLVQLTNNNGAKPVEDFGGIESQSVQLDPMEHVGMEPLQFDYQGNQVPVDSGAAAVGLFDYNSQQQLFQRPNALTVQQLTAAQQQQYALAAAHQQHIGMFSAGLAPAAFVPNPYIISAAPPGTDPYAAGLAAAATLGPAVVPHQYYGVTPWGVYPANLFQQQAAAAAAASNSASQQNNPQSQQGQQQVLRAGGNQRPLTPNQNQQGQQTDQLVAAAAVNSALAFGQGLAAGMPGYPMLAPAAYYDQTGALVVNTGARNGLGGPVRLVAPASVIISQSAAQAAVAAAAASANGPAGTANGPFRQLNSQQPQGQPQPQGNQNLASSSFYGNSSMNSNSQSSSLFSQSSGQPGNSSLGFGSSGSLGATLSSALGGFGTAVANSNTNSGSRRDSLTGSSDIYKRTSSSLTPIGHSFYNGLGFSSSPGPVGMPLPSQGPSHSQTPPPSLSSHGSSTSLNLGGLTNGSGRYISAAPGAEAKYRSASSASSLFSPSSTLFPSSRLRYGMSDVMPSGRSRLLEDFRNNRYPNLQLREIAGHIMEFSQDQHGSRFIQLKLERATPAERQLVFNEILQAAYQLMVDVFGNYVIQKFFEFGSLEQKLALAERIRGHVLSLALQMYGCRVIQKALEFIPPDQQVINEMVRELDGHVLKCVKDQNGNHVVQKCIECVQPQSLQFIIDAFKSQVFALSTHPYGCRVIQRILEHCLPEQTLPILEELHQHTEQLVQDQYGNYVIQHVLEHGRPEDKSKIVAEIRGNVLVLSQHKFASNVVEKCVTHASRTERAMLIDEVCTMNDGPHSALYTMMKDQYANYVVQKMIDVAEPAQRKIVMHKIRPHIATLRKYTYGKHILAKLEKYYMKNGMDLGPMCGPSNGII.

Disordered stretches follow at residues 38–74 (LTSGPVGQQQPPQPPTHSALATGPHASPVGGSMGVAG), 491–531 (SNSA…QQTD), 611–675 (ANGP…NSSL), and 744–777 (GPVGMPLPSQGPSHSQTPPPSLSSHGSSTSLNLG). Composition is skewed to low complexity over residues 491–508 (SNSASQQNNPQSQQGQQQ), 518–531 (PLTPNQNQQGQQTD), 628–675 (QQPQ…NSSL), and 765–777 (LSSHGSSTSLNLG). The PUM-HD domain occupies 830–1172 (GRSRLLEDFR…HILAKLEKYY (343 aa)). Pumilio repeat units lie at residues 850–885 (EIAGHIMEFSQDQHGSRFIQLKLERATPAERQLVFN), 886–921 (EILQAAYQLMVDVFGNYVIQKFFEFGSLEQKLALAE), 922–959 (RIRGHVLSLALQMYGCRVIQKALEFIPPDQQVINEMVR), 960–995 (ELDGHVLKCVKDQNGNHVVQKCIECVQPQSLQFIID), 996–1031 (AFKSQVFALSTHPYGCRVIQRILEHCLPEQTLPILE), 1032–1067 (ELHQHTEQLVQDQYGNYVIQHVLEHGRPEDKSKIVA), 1068–1103 (EIRGNVLVLSQHKFASNVVEKCVTHASRTERAMLID), and 1107–1146 (TMNDGPHSALYTMMKDQYANYVVQKMIDVAEPAQRKIVMH). An adenine-nucleotide binding in RNA target region spans residues 865-869 (SRFIQ). A uracil-nucleotide binding in RNA target region spans residues 901–905 (NYVIQ). The segment at 937-941 (CRVIQ) is adenine-nucleotide binding in RNA target. Residues 975–979 (NHVVQ) are non-specific-nucleotide binding in RNA target. The interval 1011 to 1015 (CRVIQ) is adenine-nucleotide binding in RNA target. The segment at 1047 to 1051 (NYVIQ) is uracil-nucleotide binding in RNA target. A guanine-nucleotide binding in RNA target region spans residues 1083–1087 (SNVVE). The tract at residues 1126–1130 (NYVVQ) is uracil-nucleotide binding in RNA target.

As to quaternary structure, interacts with cpeb1-a; interacts with unphosphorylated cpeb1-a but not phosphorylated. Component of a complex with papd4, sympk, tacc3, parn, dazl and cpeb1. Post-translationally, phosphorylated. Phosphorylation takes place at the time of dissociation of cpeb1-a from pum1 and the translational activation of ccnb1 mRNA. As to expression, present in oocytes (at protein level).

Its subcellular location is the cytoplasm. The protein localises to the P-body. The protein resides in the cytoplasmic granule. Its function is as follows. Sequence-specific RNA-binding protein that acts as a post-transcriptional repressor by binding the 3'-UTR of mRNA targets. Binds to an RNA consensus sequence, the Pumilio Response Element (PRE), 5'-UGUANAUA-3', that is related to the Nanos Response Element (NRE). Mediates post-transcriptional repression of transcripts via different mechanisms: acts via direct recruitment of deadenylase complexes leading to translational inhibition and mRNA degradation. Also mediates deadenylation-independent repression by promoting accessibility of miRNAs. Acts as a post-transcriptional repressor of ccnb1 mRNA during oocyte maturation. This Xenopus laevis (African clawed frog) protein is Pumilio homolog 1.